The following is a 2410-amino-acid chain: Coprinoferrin synthetase (2410 aa).

Residues 237–646 (LERRAKTNPH…GRIDTQIKVR (410 aa)) are adenylation 1. Residues 783–860 (RDCTPLEAEV…DIAQLVHVST (78 aa)) form the Carrier 1 domain. S820 carries the O-(pantetheine 4'-phosphoryl)serine modification. Residues 891-1260 (DILPPFPVQE…SVEAVVNVHD (370 aa)) form a condensation 1 region. A disordered region spans residues 1298–1317 (ELPLPSRRSPEPVRKVNDDE). Residues 1305–1314 (RSPEPVRKVN) are compositionally biased toward basic and acidic residues. The region spanning 1324-1400 (LLDPVVVADL…RLARVVSNNK (77 aa)) is the Carrier 2 domain. The residue at position 1361 (S1361) is an O-(pantetheine 4'-phosphoryl)serine. The condensation 2 stretch occupies residues 1436 to 1839 (IIPSTALQSG…RIGRTFSVPS (404 aa)). The Carrier 3 domain occupies 1858–1932 (VQAGIIHPVL…DLVLQATEIK (75 aa)). Position 1893 is an O-(pantetheine 4'-phosphoryl)serine (S1893). The tract at residues 1992-2315 (FQYLFTFKLP…TPIFNVNVNV (324 aa)) is condensation 3.

This sequence belongs to the NRP synthetase family.

The protein operates within siderophore biosynthesis. Nonribosomal peptide synthase; part of the gene cluster that mediates the biosynthesis of coprinoferrin, an acylated tripeptide hydroxamate siderophore. The biosynthesis of coprinoferrin depends on the hydroxylation of ornithine to N(5)-hydroxyornithine, catalyzed by the monooxygenase cpf2. The second step, the acylation of N(5)-hydroxy-L-ornithine to yield N(5)-hexanoyl-N(5)-hydroxyl-L-ornithine is catalyzed by a not yet identified acyltransferase. Finally, assembly of coprinoferrin is catalyzed by the nonribosomal peptide synthase (NRPS) cpf1 via amide bond formation between three N(5)-hexanoyl-N(5)-hydroxyl-L-ornithine molecules to release the linear trimer. Interestingly, proteins seemingly not directly related to biosynthesis, such as transcription factors, replication factors, and autophagy-related proteins, are conserved among the clusters homologous to the coprinoferrin cluster, suggesting that the cluster may also play developmental and cell biological functions. The polypeptide is Coprinoferrin synthetase (Coprinopsis cinerea (strain Okayama-7 / 130 / ATCC MYA-4618 / FGSC 9003) (Inky cap fungus)).